The chain runs to 62 residues: Photosystem II reaction center protein Z (62 aa).

2 consecutive transmembrane segments (helical) span residues Thr8–Ala28 and Phe41–Val61.

The protein belongs to the PsbZ family. In terms of assembly, PSII is composed of 1 copy each of membrane proteins PsbA, PsbB, PsbC, PsbD, PsbE, PsbF, PsbH, PsbI, PsbJ, PsbK, PsbL, PsbM, PsbT, PsbY, PsbZ, Psb30/Ycf12, at least 3 peripheral proteins of the oxygen-evolving complex and a large number of cofactors. It forms dimeric complexes.

The protein localises to the plastid. It is found in the chloroplast thylakoid membrane. Functionally, may control the interaction of photosystem II (PSII) cores with the light-harvesting antenna, regulates electron flow through the 2 photosystem reaction centers. PSII is a light-driven water plastoquinone oxidoreductase, using light energy to abstract electrons from H(2)O, generating a proton gradient subsequently used for ATP formation. This is Photosystem II reaction center protein Z from Oltmannsiellopsis viridis (Marine flagellate).